The chain runs to 233 residues: Somatolactin (233 aa).

Residues 1–24 (MNMMQVMQSVVWAVLLWPCLVSLG) form the signal peptide. 3 cysteine pairs are disulfide-bonded: Cys-29-Cys-39, Cys-89-Cys-205, and Cys-222-Cys-230.

The protein belongs to the somatotropin/prolactin family. In terms of tissue distribution, pituitary gland.

It localises to the secreted. Its function is as follows. May be associated with ion regulation and reproduction. The sequence is that of Somatolactin from Oncorhynchus keta (Chum salmon).